The following is a 566-amino-acid chain: Serine/threonine-protein kinase haspin homolog (566 aa).

A Protein kinase domain is found at 248–566 (LLNTKKIGEG…HCANYLFNLN (319 aa)). ATP contacts are provided by residues 254 to 262 (IGEGAYGEV), Lys-282, 377 to 382 (KFAGSD), 418 to 423 (DLHLGN), and 456 to 458 (DYT). Catalysis depends on Asp-418, which acts as the Proton acceptor.

The protein belongs to the protein kinase superfamily. Ser/Thr protein kinase family. Haspin subfamily. As to quaternary structure, interacts with pds5 and vtd. It depends on Mg(2+) as a cofactor.

The protein localises to the nucleus lamina. The protein resides in the chromosome. It is found in the cytoplasm. It localises to the cytoskeleton. Its subcellular location is the spindle. The catalysed reaction is L-seryl-[protein] + ATP = O-phospho-L-seryl-[protein] + ADP + H(+). It carries out the reaction L-threonyl-[protein] + ATP = O-phospho-L-threonyl-[protein] + ADP + H(+). Serine/threonine-protein kinase that phosphorylates histone H3 at 'Thr-4' (H3T3ph) during mitosis and interphase. Function is essential for chromosome organization during mitosis and genome organization in interphase cells, thus playing a functional role in gene regulation. During mitosis, may act through H3T3ph to both position and modulate activation of AURKB and other components of the chromosomal passenger complex (CPC) at centromeres to ensure proper chromatid cohesion, metaphase alignment and normal progression through the cell cycle. During interphase, associates with the cohesion complex and mediates pds5 binding to chromatin to ensure correct sister chromatid cohesion, chromatin organization, and also functions with Pds5-cohesin to modify Polycomb-dependent homeotic transformations. Function during interphase is required for insulator activity, nuclear compaction, heterochromatin-induced position-effect variegation and PcG-mediated pairing-sensitive silencing. In Drosophila melanogaster (Fruit fly), this protein is Serine/threonine-protein kinase haspin homolog.